The sequence spans 112 residues: Integration host factor subunit alpha (112 aa).

Belongs to the bacterial histone-like protein family. In terms of assembly, heterodimer of an alpha and a beta chain.

Its function is as follows. This protein is one of the two subunits of integration host factor, a specific DNA-binding protein that functions in genetic recombination as well as in transcriptional and translational control. The polypeptide is Integration host factor subunit alpha (Rhizobium rhizogenes (strain K84 / ATCC BAA-868) (Agrobacterium radiobacter)).